Consider the following 355-residue polypeptide: UDP-N-acetylglucosamine--N-acetylmuramyl-(pentapeptide) pyrophosphoryl-undecaprenol N-acetylglucosamine transferase (355 aa).

UDP-N-acetyl-alpha-D-glucosamine-binding positions include 15-17 (TGG), Asn127, Arg163, Ser191, Ile244, 263-268 (ALTVSE), and Gln288.

Belongs to the glycosyltransferase 28 family. MurG subfamily.

It is found in the cell inner membrane. The enzyme catalyses di-trans,octa-cis-undecaprenyl diphospho-N-acetyl-alpha-D-muramoyl-L-alanyl-D-glutamyl-meso-2,6-diaminopimeloyl-D-alanyl-D-alanine + UDP-N-acetyl-alpha-D-glucosamine = di-trans,octa-cis-undecaprenyl diphospho-[N-acetyl-alpha-D-glucosaminyl-(1-&gt;4)]-N-acetyl-alpha-D-muramoyl-L-alanyl-D-glutamyl-meso-2,6-diaminopimeloyl-D-alanyl-D-alanine + UDP + H(+). Its pathway is cell wall biogenesis; peptidoglycan biosynthesis. Cell wall formation. Catalyzes the transfer of a GlcNAc subunit on undecaprenyl-pyrophosphoryl-MurNAc-pentapeptide (lipid intermediate I) to form undecaprenyl-pyrophosphoryl-MurNAc-(pentapeptide)GlcNAc (lipid intermediate II). The protein is UDP-N-acetylglucosamine--N-acetylmuramyl-(pentapeptide) pyrophosphoryl-undecaprenol N-acetylglucosamine transferase of Escherichia coli O127:H6 (strain E2348/69 / EPEC).